The sequence spans 121 residues: Protein ripply2.1 (121 aa).

The segment at 1 to 69 is disordered; the sequence is MEPNQQRSCG…DKGKPPSFQH (69 aa). Positions 29–32 match the WRPW motif motif; the sequence is WRPW. The span at 39–57 shows a compositional bias: polar residues; it reads HVQNPPTAQQQFYSDNQSH. The segment at 69 to 104 is ripply homology domain; the sequence is HPVKLFWPKSRCYDFMYQEAEELLRHFPVQATISLY.

It belongs to the ripply family. As to expression, expressed in the presomitic mesoderm (PSM) in the anterior halves of somitomeres S-0, S-I and S-II and in the newly formed somites.

The protein resides in the nucleus. In terms of biological role, required during somitogenesis to regulate somite differentiation and the positioning of the presomitic mesoderm-front. Represses the expression of genes involved in somite segmentation by acting with the corepressor tle4 to down-regulate the transcriptional activity of tbx6. Also regulates retinoic acid signaling during somitogenesis and is necessary for the expression of aldh1a2/raldh2. In Xenopus laevis (African clawed frog), this protein is Protein ripply2.1 (ripply2.1).